A 256-amino-acid chain; its full sequence is Small ribosomal subunit protein uS2 (256 aa).

The protein belongs to the universal ribosomal protein uS2 family.

In Rhizobium rhizogenes (strain K84 / ATCC BAA-868) (Agrobacterium radiobacter), this protein is Small ribosomal subunit protein uS2.